The sequence spans 416 residues: Antigen EG13 (416 aa).

The F-BAR domain maps to 1-247 (MIQERADIEK…TVAKVDADAD (247 aa)). The disordered stretch occupies residues 297–327 (LKTFTSPDRGGPIPGTTDSGSNISTSPVHTT). Positions 312-327 (TTDSGSNISTSPVHTT) are enriched in polar residues. Residues 361–416 (RPGVPIRALYDYVGVEADELSFNSGDLFEKLEDEDEQGWCKGRKDGRVGLYPRQLR) form the SH3 domain.

This Echinococcus granulosus (Hydatid tapeworm) protein is Antigen EG13 (EG13).